Reading from the N-terminus, the 141-residue chain is UPF0310 protein SGO_1818 (141 aa).

The protein belongs to the UPF0310 family.

This is UPF0310 protein SGO_1818 from Streptococcus gordonii (strain Challis / ATCC 35105 / BCRC 15272 / CH1 / DL1 / V288).